The following is a 230-amino-acid chain: Uracil-DNA glycosylase (230 aa).

The active-site Proton acceptor is the Asp71.

The protein belongs to the uracil-DNA glycosylase (UDG) superfamily. UNG family.

It is found in the cytoplasm. It carries out the reaction Hydrolyzes single-stranded DNA or mismatched double-stranded DNA and polynucleotides, releasing free uracil.. Its function is as follows. Excises uracil residues from the DNA which can arise as a result of misincorporation of dUMP residues by DNA polymerase or due to deamination of cytosine. The chain is Uracil-DNA glycosylase from Nocardioides sp. (strain ATCC BAA-499 / JS614).